Consider the following 150-residue polypeptide: Large ribosomal subunit protein bL9 (150 aa).

It belongs to the bacterial ribosomal protein bL9 family.

Binds to the 23S rRNA. This is Large ribosomal subunit protein bL9 from Paraburkholderia xenovorans (strain LB400).